The sequence spans 118 residues: Large ribosomal subunit protein bL19 (118 aa).

This sequence belongs to the bacterial ribosomal protein bL19 family.

This protein is located at the 30S-50S ribosomal subunit interface and may play a role in the structure and function of the aminoacyl-tRNA binding site. In Saccharophagus degradans (strain 2-40 / ATCC 43961 / DSM 17024), this protein is Large ribosomal subunit protein bL19.